The following is a 331-amino-acid chain: Ribose-phosphate pyrophosphokinase (331 aa).

55–57 contacts ATP; it reads DGE. Positions 148 and 187 each coordinate Mg(2+). Lys211 is a catalytic residue. D-ribose 5-phosphate-binding positions include Arg213, Asp237, and 241-245; that span reads DTGGT.

The protein belongs to the ribose-phosphate pyrophosphokinase family. Class I subfamily. In terms of assembly, homohexamer. Requires Mg(2+) as cofactor.

Its subcellular location is the cytoplasm. The enzyme catalyses D-ribose 5-phosphate + ATP = 5-phospho-alpha-D-ribose 1-diphosphate + AMP + H(+). It participates in metabolic intermediate biosynthesis; 5-phospho-alpha-D-ribose 1-diphosphate biosynthesis; 5-phospho-alpha-D-ribose 1-diphosphate from D-ribose 5-phosphate (route I): step 1/1. In terms of biological role, involved in the biosynthesis of the central metabolite phospho-alpha-D-ribosyl-1-pyrophosphate (PRPP) via the transfer of pyrophosphoryl group from ATP to 1-hydroxyl of ribose-5-phosphate (Rib-5-P). In Parasynechococcus marenigrum (strain WH8102), this protein is Ribose-phosphate pyrophosphokinase.